The sequence spans 222 residues: 2-C-methyl-D-erythritol 4-phosphate cytidylyltransferase (222 aa).

It belongs to the IspD/TarI cytidylyltransferase family. IspD subfamily.

The catalysed reaction is 2-C-methyl-D-erythritol 4-phosphate + CTP + H(+) = 4-CDP-2-C-methyl-D-erythritol + diphosphate. It participates in isoprenoid biosynthesis; isopentenyl diphosphate biosynthesis via DXP pathway; isopentenyl diphosphate from 1-deoxy-D-xylulose 5-phosphate: step 2/6. Functionally, catalyzes the formation of 4-diphosphocytidyl-2-C-methyl-D-erythritol from CTP and 2-C-methyl-D-erythritol 4-phosphate (MEP). This Thermotoga sp. (strain RQ2) protein is 2-C-methyl-D-erythritol 4-phosphate cytidylyltransferase.